Here is a 255-residue protein sequence, read N- to C-terminus: Phosphate import ATP-binding protein PstB (255 aa).

One can recognise an ABC transporter domain in the interval 10-250; it reads INIKDLNLWY…PQMKSTEDYI (241 aa). 42 to 49 is a binding site for ATP; sequence GPSGCGKS.

The protein belongs to the ABC transporter superfamily. Phosphate importer (TC 3.A.1.7) family. As to quaternary structure, the complex is composed of two ATP-binding proteins (PstB), two transmembrane proteins (PstC and PstA) and a solute-binding protein (PstS).

The protein localises to the cell membrane. The catalysed reaction is phosphate(out) + ATP + H2O = ADP + 2 phosphate(in) + H(+). In terms of biological role, part of the ABC transporter complex PstSACB involved in phosphate import. Responsible for energy coupling to the transport system. The sequence is that of Phosphate import ATP-binding protein PstB from Methanococcoides burtonii (strain DSM 6242 / NBRC 107633 / OCM 468 / ACE-M).